We begin with the raw amino-acid sequence, 383 residues long: Beta-1,3-galactosyltransferase 4 (383 aa).

Residues 1 to 8 lie on the Cytoplasmic side of the membrane; that stretch reads MPLSLFRR. The chain crosses the membrane as a helical span at residues 9–29; sequence LLLAALLLVIIWTLFGPSGIG. Over 30–383 the chain is Lumenal; that stretch reads EELLSLSLAS…RCRVIAWLHS (354 aa). The N-linked (GlcNAc...) asparagine glycan is linked to N149.

It belongs to the glycosyltransferase 31 family.

The protein resides in the golgi apparatus membrane. The enzyme catalyses a ganglioside GM2 (d18:1(4E)) + UDP-alpha-D-galactose = a ganglioside GM1 (d18:1(4E)) + UDP + H(+). The catalysed reaction is a ganglioside GM2 + UDP-alpha-D-galactose = a ganglioside GM1 + UDP + H(+). It catalyses the reaction a ganglioside GD2 (d18:1(4E)) + UDP-alpha-D-galactose = a ganglioside GD1b (d18:1(4E)) + UDP + H(+). It carries out the reaction a ganglioside GA2 (d18:1(4E)) + UDP-alpha-D-galactose = a ganglioside GA1 (d18:1(4E)) + UDP + H(+). It functions in the pathway protein modification; protein glycosylation. In terms of biological role, involved in GM1/GD1B/GA1 ganglioside biosynthesis. In Canis lupus familiaris (Dog), this protein is Beta-1,3-galactosyltransferase 4 (B3GALT4).